The primary structure comprises 206 residues: Small ribosomal subunit protein uS4 (206 aa).

In terms of domain architecture, S4 RNA-binding spans 96-158; sequence GRLDNVVYRM…AKQQTRIKAA (63 aa).

It belongs to the universal ribosomal protein uS4 family. In terms of assembly, part of the 30S ribosomal subunit. Contacts protein S5. The interaction surface between S4 and S5 is involved in control of translational fidelity.

Functionally, one of the primary rRNA binding proteins, it binds directly to 16S rRNA where it nucleates assembly of the body of the 30S subunit. With S5 and S12 plays an important role in translational accuracy. This chain is Small ribosomal subunit protein uS4, found in Vibrio vulnificus (strain CMCP6).